The chain runs to 1145 residues: Protocadherin-19 (1145 aa).

Positions 1–21 are cleaved as a signal peptide; that stretch reads MESLLLPVLLLLAVLWTQAAA. Cadherin domains lie at 22–129, 130–238, 239–346, 350–453, 454–563, and 569–672; these read LINL…APSF, PAAQ…NPVF, GEST…PPII, SVNS…HPHF, SKPY…TPVI, and INGT…QESM. Residues 22 to 678 are Extracellular-facing; sequence LINLKYSVEE…QESMGSVNLS (657 aa). 4 residues coordinate Ca(2+): E31, E32, D88, and D90. C93 and C99 are joined by a disulfide. Residues D121, N123, D124, N125, E140, D155, D157, E199, D212, D230, S231, N232, D233, N234, and E249 each contribute to the Ca(2+) site. N261 carries an N-linked (GlcNAc...) asparagine glycan. Ca(2+) is bound by residues D264, D266, N270, D305, E307, D338, N340, D341, N342, E360, D375, D377, N381, D412, and E414. The N-linked (GlcNAc...) asparagine glycan is linked to N420. Ca(2+) is bound by residues D427, D445, E446, N447, D448, N449, E464, D479, D481, N485, N522, E524, and D537. A glycan (N-linked (GlcNAc...) asparagine) is linked at N485. N546 is a glycosylation site (N-linked (GlcNAc...) asparagine). 5 residues coordinate Ca(2+): D555, V556, N557, D558, and N559. Residue N570 is glycosylated (N-linked (GlcNAc...) asparagine). Residues D594, D596, N600, and D646 each contribute to the Ca(2+) site. N676 carries N-linked (GlcNAc...) asparagine glycosylation. Residues 679-699 form a helical membrane-spanning segment; the sequence is LIFIIALGSIAGILFVTMIFV. Topologically, residues 700-1145 are cytoplasmic; the sequence is AIKCKRDNKE…SVKRLKDIVL (446 aa). 2 disordered regions span residues 901 to 921 and 1094 to 1145; these read GNSL…EHDV and LEHH…DIVL. 2 stretches are compositionally biased toward basic and acidic residues: residues 906–921 and 1106–1145; these read DSGH…EHDV and SEAE…DIVL.

Homodimer; antiparallel.

Its subcellular location is the cell membrane. Its function is as follows. Calcium-dependent cell-adhesion protein. In Mus musculus (Mouse), this protein is Protocadherin-19 (Pcdh19).